Reading from the N-terminus, the 716-residue chain is Exocyst complex component 8 (716 aa).

S15 is modified (phosphoserine). The interval 129 to 150 is disordered; the sequence is GFLPGPAGVPREGSGTGEEGKQ. The 101-residue stretch at 173–273 folds into the PH domain; it reads YLVYNGDLVE…WLEVLEETKR (101 aa). Basic and acidic residues predominate over residues 275 to 284; it reads LSDKRRREQE. The disordered stretch occupies residues 275-319; it reads LSDKRRREQEEAAAPRAPPPVTSKGSNPFEDEDDEELATPEAEEE. Residues 303–319 show a composition bias toward acidic residues; sequence FEDEDDEELATPEAEEE. At T313 the chain carries Phosphothreonine.

This sequence belongs to the EXO84 family. As to quaternary structure, the exocyst complex is composed of EXOC1, EXOC2, EXOC3, EXOC4, EXOC5, EXOC6, EXOC7 and EXOC8. Interacts (via PH domain) with GTP-bound RALA and RALB. Interacts with SH3BP1; required for the localization of both SH3BP1 and the exocyst to the leading edge of migrating cells.

It localises to the cytoplasm. Its subcellular location is the perinuclear region. It is found in the cell projection. The protein resides in the growth cone. Its function is as follows. Component of the exocyst complex involved in the docking of exocytic vesicles with fusion sites on the plasma membrane. This Mus musculus (Mouse) protein is Exocyst complex component 8 (Exoc8).